The sequence spans 353 residues: Trans-enoyl reductase fsa3 (353 aa).

An NADP(+)-binding site is contributed by 45 to 48 (VDTK). 131-138 (ISFMTTGL) contacts substrate. Residues 166 to 169 (SSAT), 189 to 192 (SPRN), Tyr207, and 254 to 255 (LE) each bind NADP(+). 275 to 279 (GPQML) contacts substrate. Residue 344–345 (IS) coordinates NADP(+).

It belongs to the zinc-containing alcohol dehydrogenase family. In terms of assembly, monomer.

The enzyme catalyses L-serine + 7 malonyl-CoA + acetyl-CoA + 2 S-adenosyl-L-methionine + ATP + 8 NADPH + 11 H(+) = (5S)-3-[(2E,6R,8E,10E,12E)-2,6-dimethyltetradeca-2,8,10,12-tetraenoyl]-5-(hydroxymethyl)pyrrolidine-2,4-dione + AMP + 2 S-adenosyl-L-homocysteine + 7 CO2 + diphosphate + 8 NADP(+) + 8 CoA + 6 H2O. The protein operates within mycotoxin biosynthesis. Functionally, trans-enoyl reductase; part of the gene cluster that mediates the biosynthesis of HIV-1 integrase inhibitor equisetin and of fusarisetin A, both trans-fused decalin-containing tetramic acids showing also antimicrobial activity. The PKS module of fsa1 together with the enoylreductase fsa3 catalyze the formation of the polyketide unit which is then conjugated to L-serine by the condensation domain of the fsa1 NRPS module. Activity of the Dieckmann cyclase domain (RED) results in release of the Dieckmann product intermediate. Diels-Alderase fsa2 is involved in endo-selective Diels-Alder cycloaddition to form the decalin ring, leading to the production of N-desmethylequisetin also called trichosetin. Subsequent N-methylation is carried out by fsa4 to give equisetin. The enzymatic gene responsible for the conversion of equisetin to fusarisetin A has not been identified yet and is probably located outside of the fsa cluster. The chain is Trans-enoyl reductase fsa3 from Fusarium sp. (strain FN080326).